Reading from the N-terminus, the 467-residue chain is Inactive pancreatic lipase-related protein 1 (467 aa).

A signal peptide spans 1 to 17 (MLIFWTITLFLLGAAKG). Disulfide bonds link cysteine 21-cysteine 27 and cysteine 109-cysteine 120. The active-site Nucleophile is the serine 171. Aspartate 194 acts as the Charge relay system in catalysis. Ca(2+) is bound by residues glutamate 205, arginine 208, aspartate 210, and aspartate 213. Cysteines 255 and 279 form a disulfide. The active-site Charge relay system is the histidine 281. 3 disulfide bridges follow: cysteine 303-cysteine 314, cysteine 317-cysteine 322, and cysteine 451-cysteine 467. Residues 356–467 (WRYGVSITLS…EDTLLTLTPC (112 aa)) enclose the PLAT domain.

This sequence belongs to the AB hydrolase superfamily. Lipase family. In terms of tissue distribution, pancreas.

The protein localises to the secreted. In terms of biological role, may function as inhibitor of dietary triglyceride digestion. Lacks detectable lipase activity towards triglycerides, diglycerides, phosphatidylcholine, galactolipids or cholesterol esters (in vitro). The chain is Inactive pancreatic lipase-related protein 1 (PNLIPRP1) from Homo sapiens (Human).